The sequence spans 198 residues: Holliday junction branch migration complex subunit RuvA (198 aa).

Positions 1–63 (MYDYIKGQLT…EDAHLLFGFH (63 aa)) are domain I. The tract at residues 64–142 (TEDEKDVFLK…EAPQETGHTK (79 aa)) is domain II. A flexible linker region spans residues 143–147 (ARSNK). The segment at 148-198 (AGNTQLDEAIEALLALGYKAKELKKIRAFFEETSETAEQYIKSALKLLMKG) is domain III.

Belongs to the RuvA family. In terms of assembly, homotetramer. Forms an RuvA(8)-RuvB(12)-Holliday junction (HJ) complex. HJ DNA is sandwiched between 2 RuvA tetramers; dsDNA enters through RuvA and exits via RuvB. An RuvB hexamer assembles on each DNA strand where it exits the tetramer. Each RuvB hexamer is contacted by two RuvA subunits (via domain III) on 2 adjacent RuvB subunits; this complex drives branch migration. In the full resolvosome a probable DNA-RuvA(4)-RuvB(12)-RuvC(2) complex forms which resolves the HJ.

The protein localises to the cytoplasm. Functionally, the RuvA-RuvB-RuvC complex processes Holliday junction (HJ) DNA during genetic recombination and DNA repair, while the RuvA-RuvB complex plays an important role in the rescue of blocked DNA replication forks via replication fork reversal (RFR). RuvA specifically binds to HJ cruciform DNA, conferring on it an open structure. The RuvB hexamer acts as an ATP-dependent pump, pulling dsDNA into and through the RuvAB complex. HJ branch migration allows RuvC to scan DNA until it finds its consensus sequence, where it cleaves and resolves the cruciform DNA. The sequence is that of Holliday junction branch migration complex subunit RuvA from Streptococcus pyogenes serotype M2 (strain MGAS10270).